We begin with the raw amino-acid sequence, 450 residues long: Glucose-6-phosphate isomerase (450 aa).

Threonine 39 is subject to Phosphothreonine. The active-site Proton donor is glutamate 291. Catalysis depends on residues histidine 312 and lysine 426.

The protein belongs to the GPI family.

It localises to the cytoplasm. The catalysed reaction is alpha-D-glucose 6-phosphate = beta-D-fructose 6-phosphate. Its pathway is carbohydrate biosynthesis; gluconeogenesis. The protein operates within carbohydrate degradation; glycolysis; D-glyceraldehyde 3-phosphate and glycerone phosphate from D-glucose: step 2/4. Catalyzes the reversible isomerization of glucose-6-phosphate to fructose-6-phosphate. In Bacillus cytotoxicus (strain DSM 22905 / CIP 110041 / 391-98 / NVH 391-98), this protein is Glucose-6-phosphate isomerase.